Here is a 429-residue protein sequence, read N- to C-terminus: Glucose-1-phosphate adenylyltransferase (429 aa).

Residues G162, E177–K178, and S209 each bind alpha-D-glucose 1-phosphate.

The protein belongs to the bacterial/plant glucose-1-phosphate adenylyltransferase family. Homotetramer.

It carries out the reaction alpha-D-glucose 1-phosphate + ATP + H(+) = ADP-alpha-D-glucose + diphosphate. Its pathway is glycan biosynthesis; glycogen biosynthesis. Functionally, involved in the biosynthesis of ADP-glucose, a building block required for the elongation reactions to produce glycogen. Catalyzes the reaction between ATP and alpha-D-glucose 1-phosphate (G1P) to produce pyrophosphate and ADP-Glc. The polypeptide is Glucose-1-phosphate adenylyltransferase (Rippkaea orientalis (strain PCC 8801 / RF-1) (Cyanothece sp. (strain PCC 8801))).